The primary structure comprises 1077 residues: Error-prone DNA polymerase (1077 aa).

It belongs to the DNA polymerase type-C family. DnaE2 subfamily.

It is found in the cytoplasm. The catalysed reaction is DNA(n) + a 2'-deoxyribonucleoside 5'-triphosphate = DNA(n+1) + diphosphate. Functionally, DNA polymerase involved in damage-induced mutagenesis and translesion synthesis (TLS). It is not the major replicative DNA polymerase. The protein is Error-prone DNA polymerase of Brucella suis biovar 1 (strain 1330).